The chain runs to 537 residues: Phosphoenolpyruvate carboxykinase (ATP) (537 aa).

Arg61, Tyr195, and Lys201 together coordinate substrate. Residues Lys201, His220, and 236-244 each bind ATP; that span reads GLSGTGKTT. Residues Lys201 and His220 each coordinate Mn(2+). Residue Asp257 participates in Mn(2+) binding. Glu285 serves as a coordination point for ATP. Basic and acidic residues predominate over residues 312–321; sequence DFNDGSKTEN. The interval 312–339 is disordered; it reads DFNDGSKTENTRSAYPLESIPNASPTGR. Arg323 lines the substrate pocket. Residues Arg323 and Thr448 each coordinate ATP.

It belongs to the phosphoenolpyruvate carboxykinase (ATP) family. Mn(2+) is required as a cofactor.

It is found in the cytoplasm. It catalyses the reaction oxaloacetate + ATP = phosphoenolpyruvate + ADP + CO2. It participates in carbohydrate biosynthesis; gluconeogenesis. In terms of biological role, involved in the gluconeogenesis. Catalyzes the conversion of oxaloacetate (OAA) to phosphoenolpyruvate (PEP) through direct phosphoryl transfer between the nucleoside triphosphate and OAA. This chain is Phosphoenolpyruvate carboxykinase (ATP), found in Rhodopseudomonas palustris (strain BisB18).